The primary structure comprises 68 residues: UPF0435 protein SA1696 (68 aa).

The protein belongs to the UPF0435 family.

In Staphylococcus aureus (strain N315), this protein is UPF0435 protein SA1696.